The following is a 587-amino-acid chain: Arginine--tRNA ligase (587 aa).

The 'HIGH' region motif lies at 126 to 136; the sequence is ANPTGPLHVGH.

Belongs to the class-I aminoacyl-tRNA synthetase family. In terms of assembly, monomer.

The protein resides in the cytoplasm. The enzyme catalyses tRNA(Arg) + L-arginine + ATP = L-arginyl-tRNA(Arg) + AMP + diphosphate. In Azoarcus sp. (strain BH72), this protein is Arginine--tRNA ligase.